We begin with the raw amino-acid sequence, 574 residues long: Proline--tRNA ligase (574 aa).

The protein belongs to the class-II aminoacyl-tRNA synthetase family. ProS type 1 subfamily. Homodimer.

It is found in the cytoplasm. It catalyses the reaction tRNA(Pro) + L-proline + ATP = L-prolyl-tRNA(Pro) + AMP + diphosphate. Catalyzes the attachment of proline to tRNA(Pro) in a two-step reaction: proline is first activated by ATP to form Pro-AMP and then transferred to the acceptor end of tRNA(Pro). As ProRS can inadvertently accommodate and process non-cognate amino acids such as alanine and cysteine, to avoid such errors it has two additional distinct editing activities against alanine. One activity is designated as 'pretransfer' editing and involves the tRNA(Pro)-independent hydrolysis of activated Ala-AMP. The other activity is designated 'posttransfer' editing and involves deacylation of mischarged Ala-tRNA(Pro). The misacylated Cys-tRNA(Pro) is not edited by ProRS. The sequence is that of Proline--tRNA ligase from Desulfovibrio desulfuricans (strain ATCC 27774 / DSM 6949 / MB).